The sequence spans 161 residues: Large ribosomal subunit protein uL15 (161 aa).

Positions 1–47 are disordered; it reads MKLHELHDNPGANRKKKRVARGPGSGKGKTAGRGIKGQTSRSGVALN. Residues 23-35 show a composition bias toward gly residues; the sequence is PGSGKGKTAGRGI.

It belongs to the universal ribosomal protein uL15 family. Part of the 50S ribosomal subunit.

Binds to the 23S rRNA. This is Large ribosomal subunit protein uL15 from Paracoccus denitrificans (strain Pd 1222).